The primary structure comprises 443 residues: Signal recognition particle 54 kDa protein (443 aa).

GTP is bound by residues 104 to 111, 184 to 188, and 242 to 245; these read GLQGSGKT, DTAGR, and TKLD.

The protein belongs to the GTP-binding SRP family. SRP54 subfamily. Part of the signal recognition particle protein translocation system, which is composed of SRP and FtsY. Archaeal SRP consists of a 7S RNA molecule of 300 nucleotides and two protein subunits: SRP54 and SRP19.

The protein localises to the cytoplasm. The enzyme catalyses GTP + H2O = GDP + phosphate + H(+). Functionally, involved in targeting and insertion of nascent membrane proteins into the cytoplasmic membrane. Binds to the hydrophobic signal sequence of the ribosome-nascent chain (RNC) as it emerges from the ribosomes. The SRP-RNC complex is then targeted to the cytoplasmic membrane where it interacts with the SRP receptor FtsY. In Methanosarcina mazei (strain ATCC BAA-159 / DSM 3647 / Goe1 / Go1 / JCM 11833 / OCM 88) (Methanosarcina frisia), this protein is Signal recognition particle 54 kDa protein.